A 462-amino-acid polypeptide reads, in one-letter code: Calcitonin gene-related peptide type 1 receptor (462 aa).

An N-terminal signal peptide occupies residues 1 to 22 (MEKKFFLSFLFLLPFFMILVIA). The Extracellular segment spans residues 23-140 (ESEEENPDDL…NTHEKVKTAL (118 aa)). Intrachain disulfides connect Cys-49-Cys-75, Cys-66-Cys-106, and Cys-89-Cys-128. Asn-67, Asn-119, and Asn-124 each carry an N-linked (GlcNAc...) asparagine glycan. A helical membrane pass occupies residues 141–165 (NLFYLTIIGHVLSIASLLISLGIFF). The Cytoplasmic segment spans residues 166–176 (YFKSLSCQRIT). A helical transmembrane segment spans residues 177–199 (LHKNLFFSFVCNSVITIIHLTAV). At 200–210 (ANNQALVATNP) the chain is on the extracellular side. A helical transmembrane segment spans residues 211 to 239 (VSCKVSQFIHLYLMGCNYFWMLCEGIYLH). The Cytoplasmic portion of the chain corresponds to 240-253 (TLVVVAVFAEKQHL). Residues 254 to 274 (MWYYFLGWGFPLIPACIHAVA) form a helical membrane-spanning segment. Residues 275–290 (RRLYYNDNCWISSDTQ) are Extracellular-facing. The required for RAMP3 interaction stretch occupies residues 289 to 290 (TQ). A helical transmembrane segment spans residues 291–315 (LLYIIHGPICAALLVNLFFLLNIVR). The Cytoplasmic portion of the chain corresponds to 316–330 (VLITKLKVTHQAESN). The chain crosses the membrane as a helical span at residues 331 to 352 (LYMKAVRATLILVPLLGIEFVL). Residues 353 to 367 (IPWRPEGKIAEEIYD) lie on the Extracellular side of the membrane. The helical transmembrane segment at 368 to 388 (YIINILMHYQGLLVSTIFCFF) threads the bilayer. The Cytoplasmic portion of the chain corresponds to 389 to 462 (NGEVQAILRR…VVIKPEKLYD (74 aa)). Phosphoserine is present on residues Ser-421 and Ser-446.

This sequence belongs to the G-protein coupled receptor 2 family. As to quaternary structure, heterodimer of CALCRL and RAMP1; the receptor complex functions as CGRP receptor. Heterodimer of CALCRL and RAMP2 or CALCRL and RAMP3; the complexes function as adrenomedullin receptor.

The protein resides in the cell membrane. G protein-coupled receptor which specificity is determined by its interaction with receptor-activity-modifying proteins (RAMPs). Together with RAMP1, form the receptor complex for calcitonin-gene-related peptides CALCA/CGRP1 and CALCB/CGRP2. Together with RAMP2 or RAMP3, function as receptor complexes for adrenomedullin (ADM and ADM2). Ligand binding causes a conformation change that triggers signaling via guanine nucleotide-binding proteins (G proteins) and modulates the activity of downstream effectors. Activates cAMP-dependent pathway. The protein is Calcitonin gene-related peptide type 1 receptor (CALCRL) of Bos taurus (Bovine).